Consider the following 195-residue polypeptide: Interferon tau (195 aa).

The signal sequence occupies residues 1-23 (MAFMLSLLMALVLVSYGLGGSLG). 2 cysteine pairs are disulfide-bonded: Cys52–Cys162 and Cys87–Cys109.

The protein belongs to the alpha/beta interferon family. IFN-alphaII subfamily.

It is found in the secreted. Its function is as follows. Paracrine hormone primarily responsible for maternal recognition of pregnancy. Interacts with endometrial receptors, probably type I interferon receptors, and blocks estrogen receptor expression, preventing the estrogen-induced increase in oxytocin receptor expression in the endometrium. This results in the suppression of the pulsatile endometrial release of the luteolytic hormone prostaglandin F2-alpha, hindering the regression of the corpus luteum (luteolysis) and therefore a return to ovarian cyclicity. This, and a possible direct effect of IFN-tau on prostaglandin synthesis, leads in turn to continued ovarian progesterone secretion, which stimulates the secretion by the endometrium of the nutrients required for the growth of the conceptus. In summary, displays particularly high antiviral and antiproliferative potency concurrently with particular weak cytotoxicity, high antiluteolytic activity and immunomodulatory properties. In contrast with other IFNs, IFN-tau is not virally inducible. In Giraffa camelopardalis (Giraffe), this protein is Interferon tau (IFNT).